The sequence spans 360 residues: UDP-N-acetylglucosamine--N-acetylmuramyl-(pentapeptide) pyrophosphoryl-undecaprenol N-acetylglucosamine transferase (360 aa).

Residues 15–17 (TGG), N124, R165, S191, and Q285 each bind UDP-N-acetyl-alpha-D-glucosamine.

Belongs to the glycosyltransferase 28 family. MurG subfamily.

Its subcellular location is the cell inner membrane. It carries out the reaction di-trans,octa-cis-undecaprenyl diphospho-N-acetyl-alpha-D-muramoyl-L-alanyl-D-glutamyl-meso-2,6-diaminopimeloyl-D-alanyl-D-alanine + UDP-N-acetyl-alpha-D-glucosamine = di-trans,octa-cis-undecaprenyl diphospho-[N-acetyl-alpha-D-glucosaminyl-(1-&gt;4)]-N-acetyl-alpha-D-muramoyl-L-alanyl-D-glutamyl-meso-2,6-diaminopimeloyl-D-alanyl-D-alanine + UDP + H(+). It participates in cell wall biogenesis; peptidoglycan biosynthesis. Cell wall formation. Catalyzes the transfer of a GlcNAc subunit on undecaprenyl-pyrophosphoryl-MurNAc-pentapeptide (lipid intermediate I) to form undecaprenyl-pyrophosphoryl-MurNAc-(pentapeptide)GlcNAc (lipid intermediate II). This is UDP-N-acetylglucosamine--N-acetylmuramyl-(pentapeptide) pyrophosphoryl-undecaprenol N-acetylglucosamine transferase from Gloeothece citriformis (strain PCC 7424) (Cyanothece sp. (strain PCC 7424)).